Reading from the N-terminus, the 1983-residue chain is Nonribosomal peptide synthetase verP (1983 aa).

Residues 11–405 (FAQAASRCPD…FRGRKDRTVK (395 aa)) form an adenylation 1 region. In terms of domain architecture, Carrier 1 spans 526–602 (DRHLDTLLTV…DVAPLITSRA (77 aa)). O-(pantetheine 4'-phosphoryl)serine is present on Ser-563. Residues 769-1047 (ETDELTVVLT…GQHFKHALYS (279 aa)) form a condensation 1 region. The adenylation 2 stretch occupies residues 1089-1469 (QVMGQFPSLI…GRIDRLVKLR (381 aa)). Positions 1584-1662 (ITRPKIEDKL…DQINMVRALL (79 aa)) constitute a Carrier 2 domain. Ser-1622 is modified (O-(pantetheine 4'-phosphoryl)serine). The condensation 2 stretch occupies residues 1652-1976 (KDQINMVRAL…GGLEHPLFEC (325 aa)).

This sequence belongs to the NRP synthetase family.

The protein operates within mycotoxin biosynthesis. Functionally, nonribosomal peptide synthetase; part of the gene cluster that mediates the biosynthesis of 11'-deoxyverticillin A, one of the dimeric epipolythiodioxopiperazines (ETPs) from the verticillin family that act as mycotoxins. 11'-deoxyverticillin A is required for normal conidiation. The nonribosomal peptide synthetase verP is speculated to be responsible for condensation of amino acids to form the carbon skeleton of verticillin, whereas the cluster-specific tailoring enzymes are involved in further modifications leading to the production of 11'-deoxyverticillin A. The protein is Nonribosomal peptide synthetase verP of Clonostachys rogersoniana.